A 110-amino-acid chain; its full sequence is BolA-like protein 3 (110 aa).

It belongs to the BolA/IbaG family. In terms of assembly, interacts with NFU1.

Its subcellular location is the mitochondrion. In terms of biological role, acts as a mitochondrial iron-sulfur (Fe-S) cluster assembly factor that facilitates (Fe-S) cluster insertion into a subset of mitochondrial proteins. Probably acts together with NFU1. The protein is BolA-like protein 3 (Bola3) of Mus musculus (Mouse).